Reading from the N-terminus, the 339-residue chain is Phenylalanine--tRNA ligase alpha subunit (339 aa).

E254 serves as a coordination point for Mg(2+).

This sequence belongs to the class-II aminoacyl-tRNA synthetase family. Phe-tRNA synthetase alpha subunit type 1 subfamily. As to quaternary structure, tetramer of two alpha and two beta subunits. The cofactor is Mg(2+).

It is found in the cytoplasm. It catalyses the reaction tRNA(Phe) + L-phenylalanine + ATP = L-phenylalanyl-tRNA(Phe) + AMP + diphosphate + H(+). The sequence is that of Phenylalanine--tRNA ligase alpha subunit from Clostridium kluyveri (strain ATCC 8527 / DSM 555 / NBRC 12016 / NCIMB 10680 / K1).